The primary structure comprises 183 residues: Dual-action ribosomal maturation protein DarP (183 aa).

A disordered region spans residues Met1–Glu20.

Belongs to the DarP family.

It localises to the cytoplasm. Its function is as follows. Member of a network of 50S ribosomal subunit biogenesis factors which assembles along the 30S-50S interface, preventing incorrect 23S rRNA structures from forming. Promotes peptidyl transferase center (PTC) maturation. The sequence is that of Dual-action ribosomal maturation protein DarP from Pectobacterium carotovorum subsp. carotovorum (strain PC1).